The primary structure comprises 283 residues: NAD kinase (283 aa).

Asp-68 (proton acceptor) is an active-site residue. NAD(+) contacts are provided by residues 68–69 (DG), 142–143 (ND), Arg-153, Asp-172, 183–188 (TAYSLS), and Gln-242.

Belongs to the NAD kinase family. It depends on a divalent metal cation as a cofactor.

It is found in the cytoplasm. It catalyses the reaction NAD(+) + ATP = ADP + NADP(+) + H(+). Functionally, involved in the regulation of the intracellular balance of NAD and NADP, and is a key enzyme in the biosynthesis of NADP. Catalyzes specifically the phosphorylation on 2'-hydroxyl of the adenosine moiety of NAD to yield NADP. The sequence is that of NAD kinase from Caldanaerobacter subterraneus subsp. tengcongensis (strain DSM 15242 / JCM 11007 / NBRC 100824 / MB4) (Thermoanaerobacter tengcongensis).